A 208-amino-acid polypeptide reads, in one-letter code: UPF0316 protein SERP1448 (208 aa).

Helical transmembrane passes span 8 to 28 (PWLM…FLTM), 40 to 60 (VAAV…GLVM), and 66 to 86 (IQNI…GMKI).

Belongs to the UPF0316 family.

Its subcellular location is the cell membrane. This is UPF0316 protein SERP1448 from Staphylococcus epidermidis (strain ATCC 35984 / DSM 28319 / BCRC 17069 / CCUG 31568 / BM 3577 / RP62A).